The primary structure comprises 506 residues: Maturase K (506 aa).

The protein belongs to the intron maturase 2 family. MatK subfamily.

The protein resides in the plastid. It localises to the chloroplast. In terms of biological role, usually encoded in the trnK tRNA gene intron. Probably assists in splicing its own and other chloroplast group II introns. The chain is Maturase K from Carica papaya (Papaya).